The chain runs to 132 residues: Bleomycin resistance protein (132 aa).

The region spanning 1-129 (MLQSIPALPV…DNNLISFFQQ (129 aa)) is the VOC domain.

Belongs to the bleomycin resistance protein family.

Its function is as follows. Binding protein with a strong affinity to the bleomycin family of antibiotics. The protein is Bleomycin resistance protein (bleO) of Geobacillus stearothermophilus (Bacillus stearothermophilus).